The following is a 335-amino-acid chain: L-lactate dehydrogenase B chain (335 aa).

NAD(+)-binding positions include 29–57 (GQVG…VEDK) and Arg-99. Substrate is bound by residues Arg-106, Asn-138, and Arg-169. Position 138 (Asn-138) interacts with NAD(+). The active-site Proton acceptor is His-193. Thr-248 lines the substrate pocket.

This sequence belongs to the LDH/MDH superfamily. LDH family. In terms of assembly, homotetramer.

The protein localises to the cytoplasm. It catalyses the reaction (S)-lactate + NAD(+) = pyruvate + NADH + H(+). Its pathway is fermentation; pyruvate fermentation to lactate; (S)-lactate from pyruvate: step 1/1. In terms of biological role, interconverts simultaneously and stereospecifically pyruvate and lactate with concomitant interconversion of NADH and NAD(+). The polypeptide is L-lactate dehydrogenase B chain (LDHB) (Sceloporus undulatus (Eastern fence lizard)).